We begin with the raw amino-acid sequence, 264 residues long: MEMO1 family protein Mbur_2394 (264 aa).

The protein belongs to the MEMO1 family.

The protein is MEMO1 family protein Mbur_2394 of Methanococcoides burtonii (strain DSM 6242 / NBRC 107633 / OCM 468 / ACE-M).